Here is an 81-residue protein sequence, read N- to C-terminus: Small ribosomal subunit protein bS16 (81 aa).

It belongs to the bacterial ribosomal protein bS16 family.

This is Small ribosomal subunit protein bS16 from Neisseria meningitidis serogroup C (strain 053442).